The sequence spans 332 residues: Thiamine-binding periplasmic protein (332 aa).

Residues 1 to 20 (MKLLKLTLISTALFSTAALA) form the signal peptide. Thiamine-binding positions include tryptophan 202 and 220-223 (YSTS).

Belongs to the bacterial solute-binding protein 1 family. The complex is composed of two ATP-binding proteins (ThiQ), two transmembrane proteins (ThiP) and a solute-binding protein (ThiB).

The protein resides in the periplasm. Its function is as follows. Part of the ABC transporter complex ThiBPQ involved in thiamine import. The polypeptide is Thiamine-binding periplasmic protein (thiB) (Haemophilus influenzae (strain ATCC 51907 / DSM 11121 / KW20 / Rd)).